The chain runs to 521 residues: MLNLERLGLINFKNVYRNLPVAKLIEEAVKREEGVLVNNGAFNVYTGKYTGRSPNDKFIVDEPEVHEDIWWENNKPISVEKFEKLYNRLIAYLQNRDLFIFDGFVGADPQYRVSIRVITEYAYQSLMARQLFIRPTEKELQNFVPEYTLIAAPRFKAIPEIDGVNSEAFIILSFTKKLIIIGGTQYGGEIKKSIFTLMNYLMPKKGVLSMHCSANIGKDGDTALFFGLSGTGKTTLSADPERFLIGDDEHGWSERGIFNFEGGCYAKCINLSREKEPQIWDSIRFGAILENVVYDEATRELDYTSDKITENTRAAYPIDFIPGAVQSGIGGHPKTIIFLTADAFGVLPPIAKLTKEQAMYYFLSGYTSKLAGTERGITEPQATFSTCFGAPFLPLPPMVYAKMLGEKIEKYDTKVFLVNTGWSGGPYGIGKRINLEYTRKMVSAALKGELDKVEFTKDPIFNLNIPASCPGVPSEILNPRNTWKDKEEYDKTAKRLAQRFIENFQKYKEVSEEIKNAGPKG.

Substrate-binding residues include Arg52, Tyr186, and Lys192. Residues Lys192, His211, and 227–235 each bind ATP; that span reads GLSGTGKTT. Residues Lys192 and His211 each coordinate Mn(2+). Asp248 serves as a coordination point for Mn(2+). Residues Glu276, Arg313, 432–433, and Thr438 contribute to the ATP site; that span reads RI. Arg313 contacts substrate.

The protein belongs to the phosphoenolpyruvate carboxykinase (ATP) family. Requires Mn(2+) as cofactor.

It is found in the cytoplasm. It carries out the reaction oxaloacetate + ATP = phosphoenolpyruvate + ADP + CO2. It functions in the pathway carbohydrate biosynthesis; gluconeogenesis. In terms of biological role, involved in the gluconeogenesis. Catalyzes the conversion of oxaloacetate (OAA) to phosphoenolpyruvate (PEP) through direct phosphoryl transfer between the nucleoside triphosphate and OAA. The protein is Phosphoenolpyruvate carboxykinase (ATP) of Caldanaerobacter subterraneus subsp. tengcongensis (strain DSM 15242 / JCM 11007 / NBRC 100824 / MB4) (Thermoanaerobacter tengcongensis).